An 82-amino-acid polypeptide reads, in one-letter code: Small ribosomal subunit protein bS16 (82 aa).

It belongs to the bacterial ribosomal protein bS16 family.

The polypeptide is Small ribosomal subunit protein bS16 (Yersinia enterocolitica serotype O:8 / biotype 1B (strain NCTC 13174 / 8081)).